Consider the following 91-residue polypeptide: Elongation factor 1-beta (91 aa).

This sequence belongs to the EF-1-beta/EF-1-delta family.

Its function is as follows. Promotes the exchange of GDP for GTP in EF-1-alpha/GDP, thus allowing the regeneration of EF-1-alpha/GTP that could then be used to form the ternary complex EF-1-alpha/GTP/AAtRNA. The sequence is that of Elongation factor 1-beta from Thermococcus kodakarensis (strain ATCC BAA-918 / JCM 12380 / KOD1) (Pyrococcus kodakaraensis (strain KOD1)).